The sequence spans 408 residues: LL-diaminopimelate aminotransferase (408 aa).

Substrate is bound by residues Tyr-15 and Gly-42. Pyridoxal 5'-phosphate contacts are provided by residues Tyr-72, 108–109, Tyr-132, Asn-187, Tyr-218, and 246–248; these read SK and SFS. Residues Lys-109, Tyr-132, and Asn-187 each contribute to the substrate site. At Lys-249 the chain carries N6-(pyridoxal phosphate)lysine. Residues Arg-257 and Asn-292 each contribute to the pyridoxal 5'-phosphate site. Substrate-binding residues include Asn-292 and Arg-388.

The protein belongs to the class-I pyridoxal-phosphate-dependent aminotransferase family. LL-diaminopimelate aminotransferase subfamily. As to quaternary structure, homodimer. Requires pyridoxal 5'-phosphate as cofactor.

It catalyses the reaction (2S,6S)-2,6-diaminopimelate + 2-oxoglutarate = (S)-2,3,4,5-tetrahydrodipicolinate + L-glutamate + H2O + H(+). It participates in amino-acid biosynthesis; L-lysine biosynthesis via DAP pathway; LL-2,6-diaminopimelate from (S)-tetrahydrodipicolinate (aminotransferase route): step 1/1. Its function is as follows. Involved in the synthesis of meso-diaminopimelate (m-DAP or DL-DAP), required for both lysine and peptidoglycan biosynthesis. Catalyzes the direct conversion of tetrahydrodipicolinate to LL-diaminopimelate. This chain is LL-diaminopimelate aminotransferase, found in Synechococcus sp. (strain CC9311).